The chain runs to 463 residues: Chromosomal replication initiator protein DnaA (463 aa).

The segment at 1–83 (MSTNQIILTD…LQLFQHYNNT (83 aa)) is domain I, interacts with DnaA modulators. The segment at 83–124 (TIKSIEIITKELPGTTQTVTELPTKTFADIGSSELNSENIFS) is domain II. The segment at 125–343 (TLDVRFTFDN…GALNKVIAHS (219 aa)) is domain III, AAA+ region. ATP contacts are provided by Gly-171, Gly-173, Lys-174, and Thr-175. The segment at 344–463 (NFTLKEITLE…IHLLMKILQN (120 aa)) is domain IV, binds dsDNA.

This sequence belongs to the DnaA family. As to quaternary structure, oligomerizes as a right-handed, spiral filament on DNA at oriC.

The protein resides in the cytoplasm. Functionally, plays an essential role in the initiation and regulation of chromosomal replication. ATP-DnaA binds to the origin of replication (oriC) to initiate formation of the DNA replication initiation complex once per cell cycle. Binds the DnaA box (a 9 base pair repeat at the origin) and separates the double-stranded (ds)DNA. Forms a right-handed helical filament on oriC DNA; dsDNA binds to the exterior of the filament while single-stranded (ss)DNA is stabiized in the filament's interior. The ATP-DnaA-oriC complex binds and stabilizes one strand of the AT-rich DNA unwinding element (DUE), permitting loading of DNA polymerase. After initiation quickly degrades to an ADP-DnaA complex that is not apt for DNA replication. Binds acidic phospholipids. The chain is Chromosomal replication initiator protein DnaA from Rickettsia africae (strain ESF-5).